The primary structure comprises 382 residues: UDP-N-acetylglucosamine--N-acetylmuramyl-(pentapeptide) pyrophosphoryl-undecaprenol N-acetylglucosamine transferase (382 aa).

UDP-N-acetyl-alpha-D-glucosamine contacts are provided by residues 11–13 (TGG), asparagine 124, arginine 164, serine 192, and glutamine 314.

It belongs to the glycosyltransferase 28 family. MurG subfamily.

It localises to the cell membrane. It carries out the reaction di-trans,octa-cis-undecaprenyl diphospho-N-acetyl-alpha-D-muramoyl-L-alanyl-D-glutamyl-meso-2,6-diaminopimeloyl-D-alanyl-D-alanine + UDP-N-acetyl-alpha-D-glucosamine = di-trans,octa-cis-undecaprenyl diphospho-[N-acetyl-alpha-D-glucosaminyl-(1-&gt;4)]-N-acetyl-alpha-D-muramoyl-L-alanyl-D-glutamyl-meso-2,6-diaminopimeloyl-D-alanyl-D-alanine + UDP + H(+). It participates in cell wall biogenesis; peptidoglycan biosynthesis. Cell wall formation. Catalyzes the transfer of a GlcNAc subunit on undecaprenyl-pyrophosphoryl-MurNAc-pentapeptide (lipid intermediate I) to form undecaprenyl-pyrophosphoryl-MurNAc-(pentapeptide)GlcNAc (lipid intermediate II). This is UDP-N-acetylglucosamine--N-acetylmuramyl-(pentapeptide) pyrophosphoryl-undecaprenol N-acetylglucosamine transferase from Deinococcus deserti (strain DSM 17065 / CIP 109153 / LMG 22923 / VCD115).